Consider the following 155-residue polypeptide: Xanthine-guanine phosphoribosyltransferase (155 aa).

5-phospho-alpha-D-ribose 1-diphosphate is bound by residues 37 to 38 (RG), Arg69, and 90 to 98 (DDLVDTGGT). Arg69 lines the GMP pocket. Asp91 provides a ligand contact to Mg(2+). Guanine contacts are provided by Asp94 and Ile137. Residues Asp94 and Ile137 each coordinate xanthine. Residues 94 to 98 (DTGGT) and 136 to 137 (WI) contribute to the GMP site.

It belongs to the purine/pyrimidine phosphoribosyltransferase family. XGPT subfamily. In terms of assembly, homotetramer. Mg(2+) is required as a cofactor.

The protein resides in the cell inner membrane. The enzyme catalyses GMP + diphosphate = guanine + 5-phospho-alpha-D-ribose 1-diphosphate. It catalyses the reaction XMP + diphosphate = xanthine + 5-phospho-alpha-D-ribose 1-diphosphate. It carries out the reaction IMP + diphosphate = hypoxanthine + 5-phospho-alpha-D-ribose 1-diphosphate. Its pathway is purine metabolism; GMP biosynthesis via salvage pathway; GMP from guanine: step 1/1. It functions in the pathway purine metabolism; XMP biosynthesis via salvage pathway; XMP from xanthine: step 1/1. In terms of biological role, purine salvage pathway enzyme that catalyzes the transfer of the ribosyl-5-phosphate group from 5-phospho-alpha-D-ribose 1-diphosphate (PRPP) to the N9 position of the 6-oxopurines guanine and xanthine to form the corresponding ribonucleotides GMP (guanosine 5'-monophosphate) and XMP (xanthosine 5'-monophosphate), with the release of PPi. To a lesser extent, also acts on hypoxanthine. The protein is Xanthine-guanine phosphoribosyltransferase of Aeromonas salmonicida (strain A449).